The sequence spans 829 residues: Receptor-type tyrosine-protein phosphatase alpha (829 aa).

The signal sequence occupies residues 1-19 (MDSWFILVLFGSGLIHVSA). Over 20-142 (NNATTVSPSL…ETFPPADETP (123 aa)) the chain is Extracellular. 8 N-linked (GlcNAc...) asparagine glycosylation sites follow: N21, N47, N51, N68, N80, N86, N104, and N124. The tract at residues 79 to 106 (VNSSHSDNGTRRAASTESGGTTISPNGS) is disordered. The helical transmembrane segment at 143 to 166 (IIAVMVALSSLLVIVFIIIVLYML) threads the bilayer. Over 167-829 (RFKKYKQAGS…DAFSDYANFK (663 aa)) the chain is Cytoplasmic. A phosphoserine mark is found at S202 and S204. Tyrosine-protein phosphatase domains lie at 232–528 (FREE…LLEH) and 560–818 (LEEE…VQEY). Substrate contacts are provided by residues D437, 469–475 (CSAGVGR), and Q513. C469 acts as the Phosphocysteine intermediate in catalysis. Catalysis depends on C759, which acts as the Phosphocysteine intermediate. Y825 is modified (phosphotyrosine).

This sequence belongs to the protein-tyrosine phosphatase family. Receptor class 4 subfamily. As to quaternary structure, part of a complex comprised of PTPRA, BCAR1, BCAR3 (via SH2 domain), and SRC. Within the complex, interacts (when phosphorylated on Tyr-825) with BCAR3 (via SH2 domain). Interacts with GRB2. Post-translationally, integrin binding to extracellular matrix induces phosphorylation at Tyr-825 which induces PTPRA localization and recruitment of BCAR3, BCAR1 and CRK to focal adhesions. In terms of tissue distribution, widely expressed. Highest expression in brain and kidney.

It localises to the cell membrane. The protein resides in the cell junction. It is found in the focal adhesion. It carries out the reaction O-phospho-L-tyrosyl-[protein] + H2O = L-tyrosyl-[protein] + phosphate. In terms of biological role, tyrosine protein phosphatase which is involved in integrin-mediated focal adhesion formation. Following integrin engagement, specifically recruits BCAR3, BCAR1 and CRK to focal adhesions thereby promoting SRC-mediated phosphorylation of BRAC1 and the subsequent activation of PAK and small GTPase RAC1 and CDC42. In Mus musculus (Mouse), this protein is Receptor-type tyrosine-protein phosphatase alpha (Ptpra).